Reading from the N-terminus, the 312-residue chain is Malate dehydrogenase (312 aa).

NAD(+) is bound by residues 12–17 and D36; that span reads GAGFTG. Residues R87 and R93 each coordinate substrate. NAD(+) is bound by residues N100 and 123–125; that span reads LTN. Substrate is bound at residue N125. S149 is modified (phosphoserine). R156 is a substrate binding site. The active-site Proton acceptor is the H180.

Belongs to the LDH/MDH superfamily. MDH type 3 family. As to quaternary structure, homotetramer.

The catalysed reaction is (S)-malate + NAD(+) = oxaloacetate + NADH + H(+). Its function is as follows. Catalyzes the reversible oxidation of malate to oxaloacetate. The polypeptide is Malate dehydrogenase (Bacillus israeli).